Here is a 102-residue protein sequence, read N- to C-terminus: Small ribosomal subunit protein uS10 (102 aa).

It belongs to the universal ribosomal protein uS10 family. As to quaternary structure, part of the 30S ribosomal subunit.

Its function is as follows. Involved in the binding of tRNA to the ribosomes. The chain is Small ribosomal subunit protein uS10 from Syntrophotalea carbinolica (strain DSM 2380 / NBRC 103641 / GraBd1) (Pelobacter carbinolicus).